Consider the following 1336-residue polypeptide: Cytokinesis protein sepH (1336 aa).

Over residues 1-10 the composition is skewed to low complexity; the sequence is MVSRSSETSE. The segment at 1 to 46 is disordered; the sequence is MVSRSSETSEGPPPPSKIPGTPAKTRLSRLNSSPAKQDKPKDDRVV. Basic and acidic residues predominate over residues 36–46; that stretch reads KQDKPKDDRVV. A Protein kinase domain is found at 59–309; the sequence is YQLGDCLGKG…ARKLLKHPWI (251 aa). Residues 65-73 and Lys88 each bind ATP; that span reads LGKGAFGSV. Asp181 acts as the Proton acceptor in catalysis. A disordered region spans residues 368–402; it reads SRYTPTKDILPSPVSKHVTDRFRSPDSTEEDNWDD. Over residues 384–393 the composition is skewed to basic and acidic residues; the sequence is HVTDRFRSPD. Positions 654 to 682 form a coiled coil; sequence AQLEEGLDEVDLEANIARDKYARLRGQVE. Residues 1194–1205 show a composition bias toward basic and acidic residues; sequence ERSESFSLEKRK. Positions 1194–1336 are disordered; it reads ERSESFSLEK…PTHADSDWAS (143 aa). Residues 1213-1236 show a composition bias toward polar residues; sequence TSTTPPGYLANQSAPATPQINRFN. Low complexity-rich tracts occupy residues 1253 to 1264 and 1272 to 1285; these read PSLSSSALALRP and PSLSAGLSSSAGPS. The span at 1315 to 1327 shows a compositional bias: basic residues; the sequence is SRRRSILPQRRRP.

It belongs to the protein kinase superfamily. Ser/Thr protein kinase family. CDC7 subfamily. Mg(2+) serves as cofactor.

The enzyme catalyses L-seryl-[protein] + ATP = O-phospho-L-seryl-[protein] + ADP + H(+). The catalysed reaction is L-threonyl-[protein] + ATP = O-phospho-L-threonyl-[protein] + ADP + H(+). Its function is as follows. Required for early events during cytokinesis including localization of cytoskeletal components to the cytokinetic ring. The polypeptide is Cytokinesis protein sepH (Aspergillus niger (strain ATCC MYA-4892 / CBS 513.88 / FGSC A1513)).